A 468-amino-acid polypeptide reads, in one-letter code: MGSKTFEGEGQRGGNDPSNSTSPNSAGGEPRGAHLSRDGDGSLGDGDGDDGADGDEKDGAVTTTPLTEQQPSSETTSKKKKRRKPKKKISALKQSSPPRVPLDDLFPTGQFPVGETHEYGSVVEGTARTTSEEVRYLSRNYLQDDSVLTDYRKAAEIHRQVRHWTQENVRPGQTLTEIAVGIEDGVRALLDNAGLETGQCLQSGMGFPTGLALNDCVAHYTPNPGQKDIVLQASDVMKVDFGVHINGWIVDSAFTMSFDPTYDNLLAAVKDATNTGIKNAGIDVRISDVSAAIQEAMESYEVEIGGKVFPVKPVRDISGHNINRYQIHGGKSIPFVKNSSQTKMEEGEIFAIETFGSTGRGSTVEGFGVYGYGKDPNAPKKVSSPLASARSLYKTINENFGSIVFCRRYLERLGVERYLAGMNSLVNNGIVEQYAPLMDMKGSYSAQFEHTILLRESCKEVVSRGNDY.

Over residues 1–10 (MGSKTFEGEG) the composition is skewed to basic and acidic residues. The tract at residues 1 to 106 (MGSKTFEGEG…PPRVPLDDLF (106 aa)) is disordered. Positions 16–25 (DPSNSTSPNS) are enriched in polar residues. The span at 31–40 (RGAHLSRDGD) shows a compositional bias: basic and acidic residues. Over residues 46 to 56 (GDGDDGADGDE) the composition is skewed to acidic residues. Residues 61-75 (VTTTPLTEQQPSSET) show a composition bias toward polar residues. Over residues 78 to 90 (KKKKRRKPKKKIS) the composition is skewed to basic residues. Residue His219 participates in substrate binding. Positions 240, 251, and 320 each coordinate a divalent metal cation. Residue His328 coordinates substrate. A divalent metal cation is bound by residues Glu353 and Glu449.

This sequence belongs to the peptidase M24A family. Methionine aminopeptidase eukaryotic type 2 subfamily. It depends on Co(2+) as a cofactor. The cofactor is Zn(2+). Requires Mn(2+) as cofactor. Fe(2+) serves as cofactor.

Its subcellular location is the cytoplasm. The catalysed reaction is Release of N-terminal amino acids, preferentially methionine, from peptides and arylamides.. In terms of biological role, cotranslationally removes the N-terminal methionine from nascent proteins. The N-terminal methionine is often cleaved when the second residue in the primary sequence is small and uncharged (Met-Ala-, Cys, Gly, Pro, Ser, Thr, or Val). The sequence is that of Methionine aminopeptidase 2 from Aspergillus oryzae (strain ATCC 42149 / RIB 40) (Yellow koji mold).